A 105-amino-acid chain; its full sequence is Type VII secretion system extracellular protein D (105 aa).

Forms heterodimers with EsxB.

The protein localises to the secreted. The protein is Type VII secretion system extracellular protein D of Staphylococcus aureus (strain USA300).